Reading from the N-terminus, the 60-residue chain is Cytotoxin 2 (60 aa).

4 disulfides stabilise this stretch: C3–C21, C14–C38, C42–C53, and C54–C59.

Belongs to the three-finger toxin family. Short-chain subfamily. Type IA cytotoxin sub-subfamily. In terms of assembly, monomer in solution; Homodimer and oligomer in the presence of negatively charged lipids forming a pore with a size ranging between 20 and 30 Angstroms. As to expression, expressed by the venom gland.

It is found in the secreted. It localises to the target cell membrane. In terms of biological role, shows cytolytic activity on many different cells by forming pore in lipid membranes. In vivo, increases heart rate or kills the animal by cardiac arrest. In addition, it binds to heparin with high affinity, interacts with Kv channel-interacting protein 1 (KCNIP1) in a calcium-independent manner, and binds to integrin alpha-V/beta-3 (ITGAV/ITGB3) with moderate affinity. This is Cytotoxin 2 from Naja nivea (Cape cobra).